The primary structure comprises 785 residues: (+)-copalyl diphosphate synthase 3, chloroplastic (785 aa).

K238 lines the substrate pocket. Residues D371 and D373 each coordinate Mg(2+). The DXDD motif motif lies at 371–374; that stretch reads DIDD. Substrate is bound at residue K457.

It belongs to the terpene synthase family. Mg(2+) serves as cofactor. As to expression, present in both leaves and flowers, with higher levels in leaves.

It localises to the plastid. The protein resides in the chloroplast. It carries out the reaction (2E,6E,10E)-geranylgeranyl diphosphate = (+)-copalyl diphosphate. Its pathway is secondary metabolite biosynthesis; terpenoid biosynthesis. In terms of biological role, involved in the biosynthesis of labdane-type diterpenoid including marrubiin and other labdane-related furanoid diterpenoids with potential applications as anti-diabetics, analgesics or vasorelaxants. Terpene synthase that produces (+)-copalyl diphosphate ((+)-CPP) from geranylgeranyl diphosphate (GGPP). This is (+)-copalyl diphosphate synthase 3, chloroplastic from Marrubium vulgare (White horehound).